Here is a 261-residue protein sequence, read N- to C-terminus: DNA oxidative demethylase ALKBH2 (261 aa).

The segment at 1-57 is disordered; that stretch reads MDRFLVKGAQGGLLRKQEEQEPTGEEPAVLGGDKESTRKRPRREAPGNGGHSAGPSW. The short motif at 3-7 is the PCNA-binding element; that stretch reads RFLVK. Substrate-binding positions include 102–104 and 122–124; these read FGK and YTF. The Fe2OG dioxygenase domain occupies 152–257; sequence TFNFVLINRY…RVNLTFRKIL (106 aa). Asn-159, Tyr-161, and His-171 together coordinate 2-oxoglutarate. Fe cation-binding residues include His-171 and Asp-173. Residue Asp-174 coordinates substrate. Residues His-236, Arg-248, Thr-252, and Arg-254 each contribute to the 2-oxoglutarate site. His-236 provides a ligand contact to Fe cation.

Belongs to the alkB family. Interacts with PCNA homotrimer; this interaction is enhanced during the S-phase of the cell cycle. Interacts with nucleolar proteins NCL, UBTF and NPM1. Interacts with XRCC5-XRCC6 heterodimer. Requires Fe(2+) as cofactor. As to expression, detected in colon, small intestine, ovary, testis, prostate, skeletal muscle, heart, liver and urinary bladder.

It is found in the nucleus. It localises to the nucleolus. The protein resides in the nucleoplasm. It catalyses the reaction a methylated nucleobase within DNA + 2-oxoglutarate + O2 = a nucleobase within DNA + formaldehyde + succinate + CO2. It carries out the reaction an N(1)-methyl-2'-deoxyadenosine in double-stranded DNA + 2-oxoglutarate + O2 = a 2'-deoxyadenosine in double-stranded DNA + formaldehyde + succinate + CO2 + H(+). The enzyme catalyses an N(1)-methyl-2'-deoxyadenosine in single-stranded DNA + 2-oxoglutarate + O2 = a 2'-deoxyadenosine in single-stranded DNA + formaldehyde + succinate + CO2 + H(+). The catalysed reaction is an N(3)-methyl-2'-deoxycytidine in double-stranded DNA + 2-oxoglutarate + O2 = a 2'-deoxycytidine in double-stranded DNA + formaldehyde + succinate + CO2 + H(+). It catalyses the reaction an N(3)-methyl-2'-deoxycytidine in single-stranded DNA + 2-oxoglutarate + O2 = a 2'-deoxycytidine in single-stranded DNA + formaldehyde + succinate + CO2 + H(+). It carries out the reaction a 1,N(6)-etheno-2'-deoxyadenosine in double-stranded DNA + 2-oxoglutarate + O2 + H2O = a 2'-deoxyadenosine in double-stranded DNA + glyoxal + succinate + CO2. The enzyme catalyses a 1,N(6)-etheno-2'-deoxyadenosine in single-stranded DNA + 2-oxoglutarate + O2 + H2O = a 2'-deoxyadenosine in single-stranded DNA + glyoxal + succinate + CO2. The catalysed reaction is a 3,N(4)-etheno-2'-deoxycytidine in double-stranded DNA + 2-oxoglutarate + O2 + H2O = a 2'-deoxycytidine in double-stranded DNA + glyoxal + succinate + CO2. It catalyses the reaction a 3,N(4)-etheno-2'-deoxycytidine in single-stranded DNA + 2-oxoglutarate + O2 + H2O = a 2'-deoxycytidine in single-stranded DNA + glyoxal + succinate + CO2. It carries out the reaction a 1,N(2)-etheno-2'-deoxyguanosine in double-stranded DNA + 2-oxoglutarate + O2 + H2O = a 2'-deoxyguanosine in double-stranded DNA + glyoxal + succinate + CO2. Activated by ascorbate and magnesium ions. In terms of biological role, dioxygenase that repairs alkylated nucleic acid bases by direct reversal oxidative dealkylation. Can process both double-stranded (ds) and single-stranded (ss) DNA substrates, with a strong preference for dsDNA. Uses molecular oxygen, 2-oxoglutarate and iron as cofactors to oxidize the alkyl groups that are subsequently released as aldehydes, regenerating the undamaged bases. Probes the base pair stability, locates a weakened base pair and flips the damaged base to accommodate the lesion in its active site for efficient catalysis. Repairs monoalkylated bases, specifically N1-methyladenine and N3-methylcytosine, as well as higher order alkyl adducts such as bases modified with exocyclic bridged adducts known as etheno adducts including 1,N6-ethenoadenine, 3,N4-ethenocytosine and 1,N2-ethenoguanine. Acts as a gatekeeper of genomic integrity under alkylation stress. Efficiently repairs alkylated lesions in ribosomal DNA (rDNA). These lesions can cause ss- and dsDNA strand breaks that severely impair rDNA transcription. In a response mechanism to DNA damage, associates with PCNA at replication forks to repair alkylated adducts prior to replication. In Homo sapiens (Human), this protein is DNA oxidative demethylase ALKBH2 (ALKBH2).